The chain runs to 400 residues: Argininosuccinate synthase (400 aa).

Residues 6 to 14 (AYSGGLDTS) and alanine 33 each bind ATP. Residues tyrosine 84 and serine 89 each contribute to the L-citrulline site. Glycine 114 is a binding site for ATP. L-aspartate-binding residues include threonine 116, asparagine 120, and aspartate 121. Asparagine 120 provides a ligand contact to L-citrulline. L-citrulline-binding residues include arginine 124, serine 173, serine 182, glutamate 258, and tyrosine 270.

It belongs to the argininosuccinate synthase family. Type 1 subfamily. Homotetramer.

It localises to the cytoplasm. The enzyme catalyses L-citrulline + L-aspartate + ATP = 2-(N(omega)-L-arginino)succinate + AMP + diphosphate + H(+). Its pathway is amino-acid biosynthesis; L-arginine biosynthesis; L-arginine from L-ornithine and carbamoyl phosphate: step 2/3. This chain is Argininosuccinate synthase, found in Thermus thermophilus (strain ATCC BAA-163 / DSM 7039 / HB27).